A 2637-amino-acid polypeptide reads, in one-letter code: Nonribisomal peptide synthetase valB (2637 aa).

The interval 1–376 is condensation 1; sequence MADGADYTQR…KALIRSPPST (376 aa). Residues 413–803 form an adenylation 1 region; sequence SQASRRPDAA…VGRRDNQIKL (391 aa). The Carrier 1 domain occupies 946-1022; it reads PPANPPERAL…EAASEIKEPT (77 aa). Ser-983 is modified (O-(pantetheine 4'-phosphoryl)serine). A disordered region spans residues 1016 to 1045; sequence SEIKEPTDASAPSPSPISRDLPLQKSNHDR. The condensation 2 stretch occupies residues 1063 to 1506; it reads VEAIYPCTAL…LSRADMSLLQ (444 aa). Residues 1524-1933 are adenylation 2; the sequence is AREVAHQRPL…EGRKDTRVKL (410 aa). A Carrier 2 domain is found at 2078–2154; the sequence is KEVTDDQAFM…YMVSKTSVSN (77 aa). Position 2115 is an O-(pantetheine 4'-phosphoryl)serine (Ser-2115). The interval 2193–2582 is condensation 3; it reads ESVAPATDAQ…LWMGAYLDAA (390 aa).

It belongs to the NRP synthetase family.

It participates in secondary metabolite biosynthesis. Its function is as follows. Nonribisomal peptide synthetase; part of the gene cluster that mediates the biosynthesis of valactamides. The first step of the pathway is performed by the highly reducing polyketide synthase valA that produces the polyketide part of the final products. An acetyl starter unit is incorporated by the ketosynthase domain of valA, and subsequently 6 malonyl-CoA-derived ketide units are incorporated and fully reduced to their respective alkane forms by the action of the ketoreductase, dehydratase, and enoylreductase domains (except for the penultimate unit, which is reduced only to the alkene). The final five ketide units are each proposed to be alpha-methylated by the methyltransferase domain before ketone reduction by the ketoreductase domain. The C1 domain of the nonribisomal peptide synthetase valB then catalyzes amide bond formation between the heptaketide chain and L-valine (L-Val) attached to the T1 domain. The C2 domain incorporating L-isoleucine (L-Ile) then carries out chain elongation, which is followed by macrolactonization by the Ct domain to release the final product. The polypeptide is Nonribisomal peptide synthetase valB (Aspergillus terreus).